The primary structure comprises 1414 residues: Phenyloxazoline synthase MbtB (1414 aa).

A Carrier 1 domain is found at 5-78 (TACSEIIRAE…AWSQLVSAGT (74 aa)). The residue at position 39 (S39) is an O-(pantetheine 4'-phosphoryl)serine. The interval 96–394 (EGEPFPLAPM…SSLLLDVDLT (299 aa)) is condensation/cyclization. Residues 579 to 975 (SYAQLRDQAS…RLPGVHAAAA (397 aa)) form an adenylation region. The Carrier 2 domain maps to 1057–1135 (APRTVLQRAL…ALAQLLTGRE (79 aa)). An O-(pantetheine 4'-phosphoryl)serine modification is found at S1094. The segment at 1188–1413 (GAVLVFPHAG…AVARMVSADV (226 aa)) is thioesterase.

Belongs to the ATP-dependent AMP-binding enzyme family. MbtB subfamily. Pantetheine 4'-phosphate serves as cofactor. 4'-phosphopantetheine is transferred from CoA to a specific serine in each of the two carrier protein domains, leading to their activation from apo to holo forms.

Its pathway is siderophore biosynthesis; mycobactin biosynthesis. Involved in the initial steps of the mycobactin biosynthetic pathway. Putatively couples activated salicylic acid with serine or threonine and cyclizes this precursor to the hydroxyphenyloxazoline ring system present in this class of siderophores. Essential for growth in macrophages. This is Phenyloxazoline synthase MbtB (mbtB) from Mycobacterium tuberculosis (strain ATCC 25618 / H37Rv).